Reading from the N-terminus, the 428-residue chain is Serine--tRNA ligase (428 aa).

Residue 236 to 238 (TAE) coordinates L-serine. 267–269 (RSE) is a binding site for ATP. Residue E290 coordinates L-serine. ATP is bound at residue 354-357 (EISS). An L-serine-binding site is contributed by S388.

The protein belongs to the class-II aminoacyl-tRNA synthetase family. Type-1 seryl-tRNA synthetase subfamily. As to quaternary structure, homodimer. The tRNA molecule binds across the dimer.

The protein localises to the cytoplasm. The enzyme catalyses tRNA(Ser) + L-serine + ATP = L-seryl-tRNA(Ser) + AMP + diphosphate + H(+). It catalyses the reaction tRNA(Sec) + L-serine + ATP = L-seryl-tRNA(Sec) + AMP + diphosphate + H(+). It functions in the pathway aminoacyl-tRNA biosynthesis; selenocysteinyl-tRNA(Sec) biosynthesis; L-seryl-tRNA(Sec) from L-serine and tRNA(Sec): step 1/1. Its function is as follows. Catalyzes the attachment of serine to tRNA(Ser). Is also able to aminoacylate tRNA(Sec) with serine, to form the misacylated tRNA L-seryl-tRNA(Sec), which will be further converted into selenocysteinyl-tRNA(Sec). The protein is Serine--tRNA ligase of Psychrobacter sp. (strain PRwf-1).